Consider the following 201-residue polypeptide: Probable quinol oxidase subunit 3 (201 aa).

The next 5 helical transmembrane spans lie at 20–40 (LGFW…FATL), 62–82 (LVLI…IAIY), 91–111 (LMMF…GFEI), 133–153 (FFIL…WAIC), and 172–192 (FIVS…FTAV).

It belongs to the cytochrome c oxidase subunit 3 family.

The protein resides in the cell membrane. The catalysed reaction is 2 a quinol + O2 = 2 a quinone + 2 H2O. In terms of biological role, catalyzes quinol oxidation with the concomitant reduction of oxygen to water. The chain is Probable quinol oxidase subunit 3 (qoxC) from Staphylococcus aureus (strain MSSA476).